The chain runs to 42 residues: Photosystem I reaction center subunit IX (42 aa).

The helical transmembrane segment at 7 to 27 (FLSTAPVLIMALLTVTAGILI) threads the bilayer.

It belongs to the PsaJ family.

It localises to the cellular thylakoid membrane. Functionally, may help in the organization of the PsaE and PsaF subunits. The sequence is that of Photosystem I reaction center subunit IX from Crocosphaera subtropica (strain ATCC 51142 / BH68) (Cyanothece sp. (strain ATCC 51142)).